The following is a 326-amino-acid chain: Putative F-box protein At3g22710 (326 aa).

In terms of domain architecture, F-box spans 1-50 (MTMPDLPPDLVEEILSRVPATSVKKLRSTCTQWNAIFKDERFTEKHFSKA).

In Arabidopsis thaliana (Mouse-ear cress), this protein is Putative F-box protein At3g22710.